The chain runs to 75 residues: MEEIPFENAMERLEEIVDLMNQPSTSLDSSLKLYEEADALMRICESRIRKAEDRVRELSERRNETLLSEEESFAH.

It belongs to the XseB family. Heterooligomer composed of large and small subunits.

It is found in the cytoplasm. It carries out the reaction Exonucleolytic cleavage in either 5'- to 3'- or 3'- to 5'-direction to yield nucleoside 5'-phosphates.. Its function is as follows. Bidirectionally degrades single-stranded DNA into large acid-insoluble oligonucleotides, which are then degraded further into small acid-soluble oligonucleotides. This chain is Exodeoxyribonuclease 7 small subunit, found in Chlamydia felis (strain Fe/C-56) (Chlamydophila felis).